Reading from the N-terminus, the 392-residue chain is Glyceraldehyde-3-phosphate dehydrogenase A, chloroplastic (392 aa).

Residues 1 to 56 constitute a chloroplast transit peptide; sequence NSSLQVSNKGFSEFSGLRTSSAIPFGRKTNDDLLSVVAFQTSVIGGGNSKRGVVEA. Residues 67–68, Asp91, and Arg136 each bind NADP(+); that span reads RI. Residues 208–210, Thr239, Arg254, 267–268, and Arg290 contribute to the D-glyceraldehyde 3-phosphate site; these read SCT and TG. Catalysis depends on Cys209, which acts as the Nucleophile. Asn372 is an NADP(+) binding site.

Belongs to the glyceraldehyde-3-phosphate dehydrogenase family. Tetramer of either four A chains (GAPDH 2) or two A and two B chains (GAPDH 1).

Its subcellular location is the plastid. It is found in the chloroplast. The enzyme catalyses D-glyceraldehyde 3-phosphate + phosphate + NADP(+) = (2R)-3-phospho-glyceroyl phosphate + NADPH + H(+). The protein operates within carbohydrate biosynthesis; Calvin cycle. This chain is Glyceraldehyde-3-phosphate dehydrogenase A, chloroplastic (GAPA), found in Nicotiana tabacum (Common tobacco).